The sequence spans 402 residues: Oxysterol-binding protein 8 (402 aa).

Residues 328-361 are a coiled coil; that stretch reads DRIALEEGNLDVAAKEKHNLEEKQREDKRQRVAE.

It belongs to the OSBP family.

This chain is Oxysterol-binding protein 8 (osbH), found in Dictyostelium discoideum (Social amoeba).